The sequence spans 91 residues: Preprofallaxidin-2 (91 aa).

The N-terminal stretch at 1–22 is a signal peptide; the sequence is MASLKKSLFLVLFLGLVSLSIC. The propeptide occupies 23–49; the sequence is EKEKRENEGNENEEEEENHEEGSEEKR. A disordered region spans residues 24-49; the sequence is KEKRENEGNENEEEEENHEEGSEEKR. Positions 31–41 are enriched in acidic residues; sequence GNENEEEEENH. Residue leucine 65 is modified to Leucine amide. A propeptide spanning residues 69-73 is cleaved from the precursor; sequence SEEKR. At leucine 89 the chain carries Leucine amide.

This sequence belongs to the frog skin active peptide (FSAP) family. Dermaseptin subfamily. In terms of tissue distribution, expressed by the skin glands.

It is found in the secreted. In terms of biological role, fallaxidin-3.1 shows antibacterial activity against the Gram-positive bacteria E.faecalis (MIC=100 uM) and L.lactis (MIC=100 uM). No antibacterial activity against the Gram-positive bacteria B.cereus, L.innocua, M.luteus, S.epidermidis, S.uberis and S.aureus, or the Gram-negative bacteria E.cloacae and E.coli. Functionally, fallaxidin-3.2 shows antibacterial activity against the Gram-positive bacteria E.faecalis (MIC=100 uM) and L.lactis (MIC=500 uM). No antibacterial activity against the Gram-positive bacteria B.cereus, L.innocua, M.luteus, S.epidermidis, S.uberis and S.aureus, or the Gram-negative bacteria E.cloacae and E.coli. The chain is Preprofallaxidin-2 from Litoria fallax (Eastern dwarf tree frog).